Here is a 253-residue protein sequence, read N- to C-terminus: tRNA1(Val) (adenine(37)-N6)-methyltransferase (253 aa).

The protein belongs to the methyltransferase superfamily. tRNA (adenine-N(6)-)-methyltransferase family.

The protein resides in the cytoplasm. It carries out the reaction adenosine(37) in tRNA1(Val) + S-adenosyl-L-methionine = N(6)-methyladenosine(37) in tRNA1(Val) + S-adenosyl-L-homocysteine + H(+). Functionally, specifically methylates the adenine in position 37 of tRNA(1)(Val) (anticodon cmo5UAC). This Dickeya chrysanthemi (strain Ech1591) (Dickeya zeae (strain Ech1591)) protein is tRNA1(Val) (adenine(37)-N6)-methyltransferase.